Consider the following 161-residue polypeptide: Protein-export protein SecB (161 aa).

The protein belongs to the SecB family. In terms of assembly, homotetramer, a dimer of dimers. One homotetramer interacts with 1 SecA dimer.

The protein resides in the cytoplasm. In terms of biological role, one of the proteins required for the normal export of preproteins out of the cell cytoplasm. It is a molecular chaperone that binds to a subset of precursor proteins, maintaining them in a translocation-competent state. It also specifically binds to its receptor SecA. The protein is Protein-export protein SecB of Methylocella silvestris (strain DSM 15510 / CIP 108128 / LMG 27833 / NCIMB 13906 / BL2).